The sequence spans 421 residues: 4-hydroxy-3-methylbut-2-en-1-yl diphosphate synthase (flavodoxin) (421 aa).

The tract at residues 1–20 is disordered; that stretch reads MHDAVTRPTPPSDATSWPRR. Cys311, Cys314, Cys357, and Glu364 together coordinate [4Fe-4S] cluster.

It belongs to the IspG family. It depends on [4Fe-4S] cluster as a cofactor.

The catalysed reaction is (2E)-4-hydroxy-3-methylbut-2-enyl diphosphate + oxidized [flavodoxin] + H2O + 2 H(+) = 2-C-methyl-D-erythritol 2,4-cyclic diphosphate + reduced [flavodoxin]. It functions in the pathway isoprenoid biosynthesis; isopentenyl diphosphate biosynthesis via DXP pathway; isopentenyl diphosphate from 1-deoxy-D-xylulose 5-phosphate: step 5/6. Functionally, converts 2C-methyl-D-erythritol 2,4-cyclodiphosphate (ME-2,4cPP) into 1-hydroxy-2-methyl-2-(E)-butenyl 4-diphosphate. In Stenotrophomonas maltophilia (strain R551-3), this protein is 4-hydroxy-3-methylbut-2-en-1-yl diphosphate synthase (flavodoxin).